A 178-amino-acid polypeptide reads, in one-letter code: Probable DNA-directed RNA polymerase subunit delta (178 aa).

The region spanning 14–81 is the HTH HARE-type domain; it reads KSFIDMAYTL…GENLWGLRDW (68 aa). Positions 114-178 are disordered; the sequence is LGDDDADEDD…AFEDAEDFND (65 aa). Over residues 116–178 the composition is skewed to acidic residues; sequence DDDADEDDDI…AFEDAEDFND (63 aa).

Belongs to the RpoE family. As to quaternary structure, RNAP is composed of a core of 2 alpha, a beta and a beta' subunits. The core is associated with a delta subunit and one of several sigma factors.

Its function is as follows. Participates in both the initiation and recycling phases of transcription. In the presence of the delta subunit, RNAP displays an increased specificity of transcription, a decreased affinity for nucleic acids, and an increased efficiency of RNA synthesis because of enhanced recycling. This is Probable DNA-directed RNA polymerase subunit delta from Staphylococcus epidermidis (strain ATCC 35984 / DSM 28319 / BCRC 17069 / CCUG 31568 / BM 3577 / RP62A).